The chain runs to 172 residues: MPPSSSNTAAASRSASKRLIKELETWSREQKEEKGIERLGPVNEGDLMEWEAVINGRGIGQGYDEGRWLVNISIPSTYPLAPPKMTFVTPIVHPNIALQNGEICLDLLKDAWTPAYSVLECVRAVRMLLGCPETDSPLNVDVAALLRSGDVLGTRKLVELWCQDSDSRYEGP.

In terms of domain architecture, UBC core spans 14 to 167 (SASKRLIKEL…VELWCQDSDS (154 aa)). The active-site Glycyl thioester intermediate is cysteine 104.

The protein belongs to the ubiquitin-conjugating enzyme family.

The catalysed reaction is S-ubiquitinyl-[E1 ubiquitin-activating enzyme]-L-cysteine + [E2 ubiquitin-conjugating enzyme]-L-cysteine = [E1 ubiquitin-activating enzyme]-L-cysteine + S-ubiquitinyl-[E2 ubiquitin-conjugating enzyme]-L-cysteine.. It functions in the pathway protein modification; protein ubiquitination. In terms of biological role, ubiquitin-conjugating enzyme E2 that is essential for peroxisome biogenesis and plays a key role in development, pathogenicity, and cell wall integrity. Required for long and very long-chain fatty acid utilization and is involved in lipid droplet accumulation and the elimination of reactive oxygen species. Controls the expression of proteins involved in protein biosynthesis, fatty acid metabolism, cell wall synthesis, oxidation-reduction reactions, as well as of the enzymes involved in the biosynthesis of the mycotoxin deoxynivalenol (DON), including TRI5, TRI6, and TRI10. The chain is Ubiquitin-conjugating enzyme E2 PEX4 from Gibberella zeae (strain ATCC MYA-4620 / CBS 123657 / FGSC 9075 / NRRL 31084 / PH-1) (Wheat head blight fungus).